Reading from the N-terminus, the 286-residue chain is Energy-coupling factor transporter ATP-binding protein EcfA2 (286 aa).

Positions 3–245 (IKIENLTYTY…IDTLEKVGLA (243 aa)) constitute an ABC transporter domain. Residue 40–47 (GHTGSGKS) coordinates ATP.

The protein belongs to the ABC transporter superfamily. Energy-coupling factor EcfA family. As to quaternary structure, forms a stable energy-coupling factor (ECF) transporter complex composed of 2 membrane-embedded substrate-binding proteins (S component), 2 ATP-binding proteins (A component) and 2 transmembrane proteins (T component).

Its subcellular location is the cell membrane. ATP-binding (A) component of a common energy-coupling factor (ECF) ABC-transporter complex. Unlike classic ABC transporters this ECF transporter provides the energy necessary to transport a number of different substrates. The chain is Energy-coupling factor transporter ATP-binding protein EcfA2 from Clostridium acetobutylicum (strain ATCC 824 / DSM 792 / JCM 1419 / IAM 19013 / LMG 5710 / NBRC 13948 / NRRL B-527 / VKM B-1787 / 2291 / W).